Reading from the N-terminus, the 195-residue chain is Replication restart protein PriC (195 aa).

It belongs to the PriC family. In terms of assembly, monomer. Component of the replication restart primosome, which is composed of PriA, PriB, PriC, DnaB and DnaT; DnaG primase associates transiently with this complex. Interacts with the C-terminus of SSB; this interaction is required to load the main replicative helicase onto substrate replication forks. Interacts with helicase DnaB alone and in the DnaB-DnaC complex, probably 1:1 binding with DnaB.

In terms of biological role, involved in the restart of stalled replication forks, which reloads the DnaB replicative helicase on sites other than the origin of replication. Recognizes abandoned replication forks and remodels DNA single-stranded binding protein (SSB) on ssDNA to uncover a loading site for DnaB. There are several restart pathways, the PriA-PriC pathway is a minor restart pathway. Part of the minor PriC-Rep pathway for restart of stalled replication forks, which has a different substrate specificity than PriA. Part of the major restart pathway with PriA, PriB, DnaB, DnaT and DnaG primase. priB and priC have redundant roles in the cell. The polypeptide is Replication restart protein PriC (Haemophilus influenzae (strain ATCC 51907 / DSM 11121 / KW20 / Rd)).